The following is a 466-amino-acid chain: Proline--tRNA ligase (466 aa).

The protein belongs to the class-II aminoacyl-tRNA synthetase family. ProS type 3 subfamily. In terms of assembly, homodimer.

The protein localises to the cytoplasm. The enzyme catalyses tRNA(Pro) + L-proline + ATP = L-prolyl-tRNA(Pro) + AMP + diphosphate. Functionally, catalyzes the attachment of proline to tRNA(Pro) in a two-step reaction: proline is first activated by ATP to form Pro-AMP and then transferred to the acceptor end of tRNA(Pro). In Picrophilus torridus (strain ATCC 700027 / DSM 9790 / JCM 10055 / NBRC 100828 / KAW 2/3), this protein is Proline--tRNA ligase.